Consider the following 285-residue polypeptide: Protease HtpX homolog (285 aa).

The next 2 helical transmembrane spans lie at 7–27 (TAMLMAAITALFIVIGGMIGG) and 30–50 (GMTIALLIALGMNFFSYWFSD). Position 131 (His-131) interacts with Zn(2+). The active site involves Glu-132. His-135 lines the Zn(2+) pocket. 2 consecutive transmembrane segments (helical) span residues 146-166 (ISATMAGAISALANFAMFFGG) and 177-197 (IAGIAVALLAPIAGALIQMAI). Glu-202 contributes to the Zn(2+) binding site.

It belongs to the peptidase M48B family. Requires Zn(2+) as cofactor.

It localises to the cell inner membrane. The sequence is that of Protease HtpX homolog from Burkholderia thailandensis (strain ATCC 700388 / DSM 13276 / CCUG 48851 / CIP 106301 / E264).